The following is an 871-amino-acid chain: Translation initiation factor IF-2 (871 aa).

Disordered regions lie at residues 60–101 and 184–203; these read KKNI…QEVK and ESLK…KKES. The segment covering 61 to 72 has biased composition (basic residues); the sequence is KNIKTPTAKKPK. Positions 73–101 are enriched in basic and acidic residues; the sequence is KENIKEQEKLNESEKKEPKKEEKLKQEVK. Residues 370–537 enclose the tr-type G domain; it reads TRAPVITIMG…IVLLQADILE (168 aa). Residues 379 to 386 are G1; the sequence is GHVDHGKT. GTP is bound at residue 379-386; it reads GHVDHGKT. The interval 404 to 408 is G2; the sequence is GITQH. Residues 425–428 form a G3 region; it reads DTPG. GTP is bound by residues 425–429 and 479–482; these read DTPGH and NKMD. The tract at residues 479–482 is G4; sequence NKMD. The segment at 515-517 is G5; the sequence is SAK.

It belongs to the TRAFAC class translation factor GTPase superfamily. Classic translation factor GTPase family. IF-2 subfamily.

The protein localises to the cytoplasm. Its function is as follows. One of the essential components for the initiation of protein synthesis. Protects formylmethionyl-tRNA from spontaneous hydrolysis and promotes its binding to the 30S ribosomal subunits. Also involved in the hydrolysis of GTP during the formation of the 70S ribosomal complex. This chain is Translation initiation factor IF-2, found in Campylobacter jejuni (strain RM1221).